Reading from the N-terminus, the 149-residue chain is Urease accessory protein UreE (149 aa).

Belongs to the UreE family.

Its subcellular location is the cytoplasm. Its function is as follows. Involved in urease metallocenter assembly. Binds nickel. Probably functions as a nickel donor during metallocenter assembly. In Prochlorococcus marinus (strain MIT 9301), this protein is Urease accessory protein UreE.